We begin with the raw amino-acid sequence, 640 residues long: Translation factor GUF1, mitochondrial (640 aa).

Residues 1–26 constitute a mitochondrion transit peptide; sequence MRRLRSLYLQSSICFRRFNHYSAKDT. Residues 39 to 223 form the tr-type G domain; it reads ENYRNFSIVA…AIIDRIPPPT (185 aa). Residues 48-55, 115-119, and 169-172 contribute to the GTP site; these read AHVDHGKS, DTPGH, and NKID.

This sequence belongs to the TRAFAC class translation factor GTPase superfamily. Classic translation factor GTPase family. LepA subfamily.

The protein localises to the mitochondrion inner membrane. It catalyses the reaction GTP + H2O = GDP + phosphate + H(+). Functionally, promotes mitochondrial protein synthesis. May act as a fidelity factor of the translation reaction, by catalyzing a one-codon backward translocation of tRNAs on improperly translocated ribosomes. Binds to mitochondrial ribosomes in a GTP-dependent manner. In Lachancea thermotolerans (strain ATCC 56472 / CBS 6340 / NRRL Y-8284) (Yeast), this protein is Translation factor GUF1, mitochondrial.